Here is a 176-residue protein sequence, read N- to C-terminus: Calponin-1 (176 aa).

The 104-residue stretch at 22–125 (PQTERQLRVW…STLIALASQA (104 aa)) folds into the Calponin-homology (CH) domain. The stretch at 158 to 176 (IGLQMGTNKFASQQGMTAY) is one Calponin-like repeat. The residue at position 164 (T164) is a Phosphothreonine; by ROCK2. At S169 the chain carries Phosphoserine; by ROCK2. T174 carries the post-translational modification Phosphothreonine; by ROCK2.

The protein belongs to the calponin family. As to expression, smooth muscle, and tissues containing significant amounts of smooth muscle.

In terms of biological role, thin filament-associated protein that is implicated in the regulation and modulation of smooth muscle contraction. It is capable of binding to actin, calmodulin and tropomyosin. The interaction of calponin with actin inhibits the actomyosin Mg-ATPase activity. The sequence is that of Calponin-1 (CNN1) from Meleagris gallopavo (Wild turkey).